The chain runs to 512 residues: Beta-glucosidase 44 (512 aa).

Positions 1 to 23 are cleaved as a signal peptide; the sequence is MRHLSSPPWPLLLLLLLSSFTSG. Gln-58 is an a beta-D-glucoside binding site. N-linked (GlcNAc...) asparagine glycosylation is present at Asn-86. Residues His-159 and 204 to 205 contribute to the a beta-D-glucoside site; that span reads NE. Glu-205 serves as the catalytic Proton donor. The cysteines at positions 224 and 231 are disulfide-linked. Asn-230 carries an N-linked (GlcNAc...) asparagine glycan. Residues Tyr-347 and Glu-419 each coordinate a beta-D-glucoside. Glu-419 functions as the Nucleophile in the catalytic mechanism. Asn-427 carries N-linked (GlcNAc...) asparagine glycosylation. Residues Trp-466, 473-474, and Phe-482 contribute to the a beta-D-glucoside site; that span reads EW.

This sequence belongs to the glycosyl hydrolase 1 family. As to quaternary structure, homodimer.

It is found in the secreted. The enzyme catalyses Hydrolysis of terminal, non-reducing beta-D-glucosyl residues with release of beta-D-glucose.. Functionally, hydrolyzes p-nitrophenyl beta-D-glucoside, p-nitrophenyl beta-D-mannoside, cellobiose, 4-methylumbelliferyl-beta-D-glucoside, laminarin, amygdalin, esculin and gentiobiose. This chain is Beta-glucosidase 44, found in Arabidopsis thaliana (Mouse-ear cress).